Reading from the N-terminus, the 613-residue chain is Protein CER1-like 2 (613 aa).

6 helical membrane passes run 13-33 (WTPL…DSIY), 44-64 (LLIV…ISLS), 95-115 (IIFN…TSTI), 122-142 (GVIL…YWFH), 182-202 (LILG…VVSI), and 322-342 (YLFL…SFSF). The 135-residue stretch at 134-268 (VEFIYYWFHR…MPMYDYIYGT (135 aa)) folds into the Fatty acid hydroxylase domain.

Belongs to the sterol desaturase family. Not detected in any tissues.

It is found in the membrane. The chain is Protein CER1-like 2 from Arabidopsis thaliana (Mouse-ear cress).